A 272-amino-acid polypeptide reads, in one-letter code: 3-deoxy-manno-octulosonate cytidylyltransferase (272 aa).

It belongs to the KdsB family.

The protein localises to the cytoplasm. It catalyses the reaction 3-deoxy-alpha-D-manno-oct-2-ulosonate + CTP = CMP-3-deoxy-beta-D-manno-octulosonate + diphosphate. It participates in nucleotide-sugar biosynthesis; CMP-3-deoxy-D-manno-octulosonate biosynthesis; CMP-3-deoxy-D-manno-octulosonate from 3-deoxy-D-manno-octulosonate and CTP: step 1/1. Its pathway is bacterial outer membrane biogenesis; lipopolysaccharide biosynthesis. Its function is as follows. Activates KDO (a required 8-carbon sugar) for incorporation into bacterial lipopolysaccharide in Gram-negative bacteria. This chain is 3-deoxy-manno-octulosonate cytidylyltransferase, found in Verminephrobacter eiseniae (strain EF01-2).